The sequence spans 275 residues: Release factor glutamine methyltransferase (275 aa).

S-adenosyl-L-methionine-binding positions include 114–118 (GTGSG), D137, W165, and N180. Residue 180–183 (NPPY) coordinates substrate.

This sequence belongs to the protein N5-glutamine methyltransferase family. PrmC subfamily.

The enzyme catalyses L-glutaminyl-[peptide chain release factor] + S-adenosyl-L-methionine = N(5)-methyl-L-glutaminyl-[peptide chain release factor] + S-adenosyl-L-homocysteine + H(+). Its function is as follows. Methylates the class 1 translation termination release factors RF1/PrfA and RF2/PrfB on the glutamine residue of the universally conserved GGQ motif. The chain is Release factor glutamine methyltransferase from Xylella fastidiosa (strain Temecula1 / ATCC 700964).